Reading from the N-terminus, the 343-residue chain is UDP-N-acetylglucosamine--N-acetylmuramyl-(pentapeptide) pyrophosphoryl-undecaprenol N-acetylglucosamine transferase (343 aa).

Residues threonine 10–glycine 12, asparagine 113, serine 174, and glutamine 275 contribute to the UDP-N-acetyl-alpha-D-glucosamine site.

This sequence belongs to the glycosyltransferase 28 family. MurG subfamily.

It localises to the cell membrane. The enzyme catalyses di-trans,octa-cis-undecaprenyl diphospho-N-acetyl-alpha-D-muramoyl-L-alanyl-D-glutamyl-meso-2,6-diaminopimeloyl-D-alanyl-D-alanine + UDP-N-acetyl-alpha-D-glucosamine = di-trans,octa-cis-undecaprenyl diphospho-[N-acetyl-alpha-D-glucosaminyl-(1-&gt;4)]-N-acetyl-alpha-D-muramoyl-L-alanyl-D-glutamyl-meso-2,6-diaminopimeloyl-D-alanyl-D-alanine + UDP + H(+). It participates in cell wall biogenesis; peptidoglycan biosynthesis. Cell wall formation. Catalyzes the transfer of a GlcNAc subunit on undecaprenyl-pyrophosphoryl-MurNAc-pentapeptide (lipid intermediate I) to form undecaprenyl-pyrophosphoryl-MurNAc-(pentapeptide)GlcNAc (lipid intermediate II). The chain is UDP-N-acetylglucosamine--N-acetylmuramyl-(pentapeptide) pyrophosphoryl-undecaprenol N-acetylglucosamine transferase from Wolbachia sp. subsp. Brugia malayi (strain TRS).